A 237-amino-acid chain; its full sequence is Ribonuclease PH (237 aa).

Residues R86 and G124 to R126 each bind phosphate.

The protein belongs to the RNase PH family. In terms of assembly, homohexameric ring arranged as a trimer of dimers.

The catalysed reaction is tRNA(n+1) + phosphate = tRNA(n) + a ribonucleoside 5'-diphosphate. Functionally, phosphorolytic 3'-5' exoribonuclease that plays an important role in tRNA 3'-end maturation. Removes nucleotide residues following the 3'-CCA terminus of tRNAs; can also add nucleotides to the ends of RNA molecules by using nucleoside diphosphates as substrates, but this may not be physiologically important. Probably plays a role in initiation of 16S rRNA degradation (leading to ribosome degradation) during starvation. The polypeptide is Ribonuclease PH (Shewanella sediminis (strain HAW-EB3)).